The primary structure comprises 656 residues: Anion exchange transporter (656 aa).

Topologically, residues 1–75 (MTGAKRKKRS…LSFAMLSSVH (75 aa)) are cytoplasmic. A helical membrane pass occupies residues 76-96 (PVFGLYGSLFPAIIYAIFGMG). Residues 97-144 (RHVATGTFALTSLISANAVERLVPQSSRNLTTQSNSSVLGLSEFELQR) lie on the Extracellular side of the membrane. The chain crosses the membrane as a helical span at residues 145–165 (IGVAAAVSFLGGVIQLVMFVL). A topological domain (cytoplasmic) is located at residue Gln166. The helical transmembrane segment at 167–187 (LGSATFLLTEPVISAMTTGAA) threads the bilayer. The Extracellular portion of the chain corresponds to 188 to 199 (THVVTSQVKYLL). The helical transmembrane segment at 200–220 (GIKMPYISGPLGFFYIYAYVF) threads the bilayer. At 221–222 (EN) the chain is on the cytoplasmic side. A helical transmembrane segment spans residues 223–243 (IKSVQLEALLFSLLSIIVLVL). Topologically, residues 244–254 (VKELNEQFKRK) are extracellular. Residues 255-275 (IKVVLPVDLVLIIAASFACYC) traverse the membrane as a helical segment. The Cytoplasmic portion of the chain corresponds to 276–306 (TNMENTYGLEVVGHIPNGIPPPRAPPMNILS). The helical transmembrane segment at 307 to 327 (AVLTEAFGVALVGYVASLALA) threads the bilayer. Residues 328-343 (QGSAKKFKYSVDDNQE) lie on the Extracellular side of the membrane. Residues 344–364 (FLAHGLSNVIPSFLFCIPSAA) form a helical membrane-spanning segment. The Cytoplasmic segment spans residues 365–383 (AMGRTAGLYSTGAKTQVAC). Helical transmembrane passes span 384-404 (LISC…LYWL) and 405-425 (PMCV…IQFR). Residues 426–448 (DLKKYWNVDKIDWGIWISTYIFT) are Extracellular-facing. A helical membrane pass occupies residues 449-469 (ICFAANVGLLFGVICTIAIVL). Over 470 to 656 (GRFPRAKTLS…LSKASDHSEV (187 aa)) the chain is Cytoplasmic. The STAS domain occupies 492–641 (TEMHDETSQQ…DSVPAAISII (150 aa)). A membrane targeting region spans residues 641 to 656 (IQSNKNLSKASDHSEV).

The protein belongs to the SLC26A/SulP transporter (TC 2.A.53) family. As to expression, expressed in the Reissner's membrane epithelial cells in the cochlea (at protein level). Expressed in the retinal pigment epithelium (at protein level). Abundantly expressed in parietal cells on the glandular portion of the stomach. Lower levels are observed in the kidney, with expression in the proximal tubule and thick ascending limb of the loop of Henle. Also expressed in distal segments of nephron, in extraglomerular mesagial cells and a subpopulation of intercalated cells of outer medullary collecting ducts. Expressed in the thyroid gland.

Its subcellular location is the basolateral cell membrane. It is found in the recycling endosome membrane. It localises to the apical cell membrane. The protein resides in the lateral cell membrane. The catalysed reaction is chloride(in) = chloride(out). It catalyses the reaction iodide(out) = iodide(in). It carries out the reaction bromide(in) = bromide(out). The enzyme catalyses oxalate(in) = oxalate(out). The catalysed reaction is nitrate(in) = nitrate(out). It catalyses the reaction sulfate(in) = sulfate(out). It carries out the reaction hydrogencarbonate(in) = hydrogencarbonate(out). The enzyme catalyses D-gluconate(in) = D-gluconate(out). The catalysed reaction is thiocyanate(in) = thiocyanate(out). It catalyses the reaction hydrogencarbonate(in) + chloride(out) = hydrogencarbonate(out) + chloride(in). With respect to regulation, regulated by pH. Activity inhibited by all inhibitors of several anion channels and transporters, including 4,4'-Di-isothiocyanatostilbene-2,2'-disulfonic acid (DIDS), diphenylamine-2-carboxylic acid, glybenclamide and 5-Nitro-2-(3-phenylpropyl-amino)benzoic acid. Its function is as follows. Acts as an anion channel mediating the transport of chloride, bromide, iodide, nitrate, sulfate, gluconate, thiocyanate and bicarbonate ions. Its permeability towards bicarbonate is weak and increases when pH is above 7. Mediates oxalate transport. Mediates thiocyanate transport in retinal pigment epithelium cells. Mediates iodide transport in the thyroid gland, playing an important role in the synthesis of thyroid hormones and the maintenance of thyroid function. Although it is an anion channel, according to PubMed:12736153 and PubMed:19723628 it has been shown to exhibit chloride-bicarbonate exchanger activity. The protein is Anion exchange transporter of Mus musculus (Mouse).